A 447-amino-acid chain; its full sequence is UDP-N-acetylmuramoylalanine--D-glutamate ligase (447 aa).

112-118 (GTNGKST) lines the ATP pocket.

It belongs to the MurCDEF family.

It is found in the cytoplasm. It carries out the reaction UDP-N-acetyl-alpha-D-muramoyl-L-alanine + D-glutamate + ATP = UDP-N-acetyl-alpha-D-muramoyl-L-alanyl-D-glutamate + ADP + phosphate + H(+). Its pathway is cell wall biogenesis; peptidoglycan biosynthesis. Functionally, cell wall formation. Catalyzes the addition of glutamate to the nucleotide precursor UDP-N-acetylmuramoyl-L-alanine (UMA). This chain is UDP-N-acetylmuramoylalanine--D-glutamate ligase, found in Legionella pneumophila (strain Lens).